The chain runs to 372 residues: MSGKTIYLGVIGVGGVGAHFLTQLSRLPNAPSLVLLARSSQTVTSPAPSYSPAIAPSDWQSAFSTSSSASYTQSGAWNPDQIAAYLSKAPGRAVLVDNTSDPTVADAYPLFLSKGISIVTPNKKAFSSSFNLWKNIFNTAASTSSLVYHESTVGAGLPVVSTLRDLVATGDRITRIEGVFSGTLSFLFNSFAPATAQSGVSAQKWSQVVAQAKDLGYTEPDPRDDLNGMDVARKVTILARIAGLEVQSPESFPVESLIPAKLRGLTSAAEFMQRLPDFDDQMEAIKNQAEAEGKIVRYVGRVDVEGKVVKVGLQQFDKDSAIAGLKGSDNIISFYTERYGKNPLIIQGAGAGGAVTAMGVTADLIKVLERLH.

4 residues coordinate NAD(+): V13, G15, V16, and T99. The NADP(+) site is built by V16 and T99. 4 residues coordinate NADPH: V16, T99, S100, and K123. An NADP(+)-binding site is contributed by K123. Residues E150, V153, A155, and L157 each coordinate Na(+). Residues G216 and E219 each contribute to the NADP(+) site. L-homoserine-binding residues include E219 and D230. K234 (proton donor) is an active-site residue. NAD(+) is bound at residue G352. G352 provides a ligand contact to NADP(+). G352 is an NADPH binding site.

Belongs to the homoserine dehydrogenase family. Homodimer. Requires a metal cation as cofactor.

The enzyme catalyses L-homoserine + NADP(+) = L-aspartate 4-semialdehyde + NADPH + H(+). The catalysed reaction is L-homoserine + NAD(+) = L-aspartate 4-semialdehyde + NADH + H(+). It participates in amino-acid biosynthesis; L-methionine biosynthesis via de novo pathway; L-homoserine from L-aspartate: step 3/3. The protein operates within amino-acid biosynthesis; L-threonine biosynthesis; L-threonine from L-aspartate: step 3/5. Functionally, catalyzes the conversion of L-aspartate-beta-semialdehyde (L-Asa) to L-homoserine (L-Hse), the third step in the biosynthesis of amino acids that derive from aspartate (the aspartate family of amino acids), including methioinine and threonine, the latter of which is a precursor to isoleucine; production of homoserine leads to a branch-point in the pathway as it can either be O-phosphorylated for processing to threonine, or O-acylated for processing to methionine. The protein is Homoserine dehydrogenase of Paracoccidioides brasiliensis (strain Pb18).